The sequence spans 172 residues: 3-hydroxydecanoyl-[acyl-carrier-protein] dehydratase (172 aa).

Residue His71 is part of the active site.

It belongs to the thioester dehydratase family. FabA subfamily. In terms of assembly, homodimer.

The protein resides in the cytoplasm. It catalyses the reaction a (3R)-hydroxyacyl-[ACP] = a (2E)-enoyl-[ACP] + H2O. It carries out the reaction (3R)-hydroxydecanoyl-[ACP] = (2E)-decenoyl-[ACP] + H2O. The catalysed reaction is (2E)-decenoyl-[ACP] = (3Z)-decenoyl-[ACP]. It participates in lipid metabolism; fatty acid biosynthesis. Its function is as follows. Necessary for the introduction of cis unsaturation into fatty acids. Catalyzes the dehydration of (3R)-3-hydroxydecanoyl-ACP to E-(2)-decenoyl-ACP and then its isomerization to Z-(3)-decenoyl-ACP. Can catalyze the dehydratase reaction for beta-hydroxyacyl-ACPs with saturated chain lengths up to 16:0, being most active on intermediate chain length. The sequence is that of 3-hydroxydecanoyl-[acyl-carrier-protein] dehydratase from Maricaulis maris (strain MCS10) (Caulobacter maris).